Reading from the N-terminus, the 121-residue chain is Dihydroneopterin aldolase (121 aa).

Substrate-binding residues include E25 and M114.

Belongs to the archaeal dihydroneopterin aldolase family. As to quaternary structure, homotetramer.

It catalyses the reaction 7,8-dihydroneopterin = 6-hydroxymethyl-7,8-dihydropterin + glycolaldehyde. The protein operates within cofactor biosynthesis; 5,6,7,8-tetrahydromethanopterin biosynthesis. Catalyzes the conversion of 7,8-dihydroneopterin (H2Neo) to 6-hydroxymethyl-7,8-dihydropterin (6-HMD). This Methanocaldococcus jannaschii (strain ATCC 43067 / DSM 2661 / JAL-1 / JCM 10045 / NBRC 100440) (Methanococcus jannaschii) protein is Dihydroneopterin aldolase.